Here is a 100-residue protein sequence, read N- to C-terminus: Urease subunit gamma (100 aa).

It belongs to the urease gamma subunit family. Heterotrimer of UreA (gamma), UreB (beta) and UreC (alpha) subunits. Three heterotrimers associate to form the active enzyme.

The protein localises to the cytoplasm. It catalyses the reaction urea + 2 H2O + H(+) = hydrogencarbonate + 2 NH4(+). It participates in nitrogen metabolism; urea degradation; CO(2) and NH(3) from urea (urease route): step 1/1. This Blochmanniella floridana protein is Urease subunit gamma.